Here is a 264-residue protein sequence, read N- to C-terminus: tRNA pseudouridine synthase A (264 aa).

Catalysis depends on D51, which acts as the Nucleophile. Y109 serves as a coordination point for substrate.

The protein belongs to the tRNA pseudouridine synthase TruA family. In terms of assembly, homodimer.

The enzyme catalyses uridine(38/39/40) in tRNA = pseudouridine(38/39/40) in tRNA. In terms of biological role, formation of pseudouridine at positions 38, 39 and 40 in the anticodon stem and loop of transfer RNAs. The chain is tRNA pseudouridine synthase A from Yersinia pseudotuberculosis serotype O:1b (strain IP 31758).